The sequence spans 712 residues: Cyclomaltodextrin glucanotransferase (712 aa).

Positions 1–27 (MKRFMKLTAVWTLWLSLTLGLLSPVHA) are cleaved as a signal peptide. Residues 28-165 (APDTSVSNKQ…NIKVIIDFAP (138 aa)) are A1. 4 residues coordinate Ca(2+): D54, N56, N59, and N60. The cysteines at positions 70 and 77 are disulfide-linked. G78 and D80 together coordinate Ca(2+). Position 127-128 (127-128 (YW)) interacts with substrate. A Ca(2+)-binding site is contributed by N166. Residues 166–229 (NHTSPASSDD…NLYDLADLNH (64 aa)) form a b region. H167 contributes to the substrate binding site. I217 is a binding site for Ca(2+). 220 to 223 (NLYD) is a substrate binding site. D226 serves as a coordination point for Ca(2+). An A2 region spans residues 230–433 (NNSSVDVYLK…LRKSNPAIAY (204 aa)). R254 is a substrate binding site. D256 (nucleophile) is an active-site residue. Substrate is bound at residue 259 to 260 (KH). Residue H260 coordinates Ca(2+). Catalysis depends on E284, which acts as the Proton donor. Residues H354, D398, and R402 each contribute to the substrate site. A c region spans residues 434–522 (GSTQERWINN…GTAVWQYTTD (89 aa)). Residues 523-608 (ATAPINGNVG…SNIYDNFEVL (86 aa)) form a d region. The 81-residue stretch at 526-606 (PINGNVGPMM…AASNIYDNFE (81 aa)) folds into the IPT/TIG domain. A CBM20 domain is found at 607–712 (VLTGDQVTVR…TATVNVNWQP (106 aa)). The e stretch occupies residues 609–712 (TGDQVTVRFV…TATVNVNWQP (104 aa)).

This sequence belongs to the glycosyl hydrolase 13 family. In terms of assembly, monomer. It depends on Ca(2+) as a cofactor.

The protein localises to the secreted. It carries out the reaction Cyclizes part of a (1-&gt;4)-alpha-D-glucan chain by formation of a (1-&gt;4)-alpha-D-glucosidic bond.. The protein is Cyclomaltodextrin glucanotransferase (cgt) of Bacillus sp. (strain 38-2).